We begin with the raw amino-acid sequence, 113 residues long: UPF0482 protein YnfB (113 aa).

An N-terminal signal peptide occupies residues M1–A28.

The protein belongs to the UPF0482 family.

The polypeptide is UPF0482 protein YnfB (Escherichia coli O127:H6 (strain E2348/69 / EPEC)).